The sequence spans 342 residues: Protein BMEI1586 (342 aa).

Ser90 serves as the catalytic Proton acceptor. Residues 91-92 (GS), Asp251, and 256-257 (GT) contribute to the substrate site.

Belongs to the proline racemase family. As to quaternary structure, homotetramer.

The catalysed reaction is trans-4-hydroxy-L-proline = cis-4-hydroxy-D-proline. Its function is as follows. In vitro, catalyzes the epimerization of trans-4-hydroxy-L-proline (t4LHyp) to cis-4-hydroxy-D-proline (c4DHyp) and that of trans-3-hydroxy-L-proline (t3LHyp) to cis-3-hydroxy-D-proline (c3DHyp), albeit with very low efficiency. The physiological substrate may be different. Displays neither proline racemase activity nor t3LHyp dehydratase activity. This chain is Protein BMEI1586, found in Brucella melitensis biotype 1 (strain ATCC 23456 / CCUG 17765 / NCTC 10094 / 16M).